We begin with the raw amino-acid sequence, 118 residues long: ATP-dependent Clp protease adapter protein ClpS (118 aa).

Positions 1 to 24 are disordered; the sequence is MNGSSNSGSPGGGQTGDDDGTGFD.

This sequence belongs to the ClpS family. Binds to the N-terminal domain of the chaperone ClpA.

In terms of biological role, involved in the modulation of the specificity of the ClpAP-mediated ATP-dependent protein degradation. In Hyphomonas neptunium (strain ATCC 15444), this protein is ATP-dependent Clp protease adapter protein ClpS.